The sequence spans 410 residues: Replication factor C large subunit (410 aa).

Position 46–53 (46–53 (GDPGTGKT)) interacts with ATP.

The protein belongs to the activator 1 small subunits family. RfcL subfamily. Heteromultimer composed of small subunits (RfcS) and large subunits (RfcL).

Functionally, part of the RFC clamp loader complex which loads the PCNA sliding clamp onto DNA. The protein is Replication factor C large subunit of Picrophilus torridus (strain ATCC 700027 / DSM 9790 / JCM 10055 / NBRC 100828 / KAW 2/3).